A 397-amino-acid chain; its full sequence is Elongation factor Tu (397 aa).

The 198-residue stretch at 10–207 (KPHVNIGTIG…ACDSYIEEPE (198 aa)) folds into the tr-type G domain. The interval 19–26 (GHIDHGKT) is G1. 19-26 (GHIDHGKT) serves as a coordination point for GTP. Thr-26 contributes to the Mg(2+) binding site. The tract at residues 60 to 64 (GITIA) is G2. Residues 81 to 84 (DCPG) form a G3 region. GTP contacts are provided by residues 81-85 (DCPGH) and 136-139 (NKCD). The G4 stretch occupies residues 136–139 (NKCD). Residues 174-176 (SAL) are G5.

This sequence belongs to the TRAFAC class translation factor GTPase superfamily. Classic translation factor GTPase family. EF-Tu/EF-1A subfamily. As to quaternary structure, monomer.

The protein localises to the cytoplasm. The enzyme catalyses GTP + H2O = GDP + phosphate + H(+). Its function is as follows. GTP hydrolase that promotes the GTP-dependent binding of aminoacyl-tRNA to the A-site of ribosomes during protein biosynthesis. The sequence is that of Elongation factor Tu from Maridesulfovibrio salexigens (strain ATCC 14822 / DSM 2638 / NCIMB 8403 / VKM B-1763) (Desulfovibrio salexigens).